Here is a 577-residue protein sequence, read N- to C-terminus: CDPK-related kinase 7 (577 aa).

Residues M1–F38 are disordered. The N-myristoyl glycine moiety is linked to residue G2. Positions Y124–L386 constitute a Protein kinase domain. ATP is bound by residues V130–T138 and K156. D252 acts as the Proton acceptor in catalysis. S292 bears the Phosphoserine mark. Phosphoserine; by CPK1, CPK10 and CPK34 is present on S334. The segment at E391–L421 is autoinhibitory domain. Positions S410–L430 are calmodulin binding (CaMBD). EF-hand domains follow at residues P428–A464, T465–L500, E501–V540, and H543–R572. Ca(2+) contacts are provided by S443, N445, Y447, K484, E489, D520, N522, E529, D554, and K556. At S558 the chain carries Phosphoserine.

The protein belongs to the protein kinase superfamily. Ser/Thr protein kinase family. CDPK subfamily. In terms of assembly, binds calmodulin (CaM) in a calcium-dependent manner. Post-translationally, autophosphorylated.

It localises to the membrane. The catalysed reaction is L-seryl-[protein] + ATP = O-phospho-L-seryl-[protein] + ADP + H(+). The enzyme catalyses L-threonyl-[protein] + ATP = O-phospho-L-threonyl-[protein] + ADP + H(+). With respect to regulation, activated by calcium and calmodulin. Autophosphorylation may play an important role in the regulation of the kinase activity. May play a role in signal transduction pathways that involve calcium as a second messenger. This chain is CDPK-related kinase 7 (CRK7), found in Arabidopsis thaliana (Mouse-ear cress).